Consider the following 76-residue polypeptide: Envelope small membrane protein (76 aa).

At 1 to 14 (MLQLVNDNGLVVNV) the chain is on the virion surface side. The chain crosses the membrane as a helical span at residues 15–35 (ILWLFVLFFLLIISITFVQLV). Residues 36 to 76 (NLCFTCHRLCNSAVYTPIGRLYRVYKSYMRIDPLPSTVIDV) lie on the Intravirion side of the membrane.

This sequence belongs to the alphacoronaviruses E protein family. As to quaternary structure, homopentamer. Interacts with membrane protein M in the budding compartment of the host cell, which is located between endoplasmic reticulum and the Golgi complex. Interacts with Nucleoprotein. Interacts with host IRF3; this interaction inhibits type I IFN production.

The protein resides in the host Golgi apparatus membrane. It is found in the host endoplasmic reticulum. Plays a central role in virus morphogenesis and assembly. Acts as a viroporin and self-assembles in host membranes forming pentameric protein-lipid pores that allow ion transport. Also plays a role in the induction of apoptosis. Counteracts the production of type I interferon by interacting with host IRF3 component and preventing its translocation to the host nucleus. The sequence is that of Envelope small membrane protein from Sus scrofa (Pig).